The sequence spans 451 residues: Trigger factor (451 aa).

Positions 165–250 (DDKLTIDFEG…LHQIQVREAL (86 aa)) constitute a PPIase FKBP-type domain.

Belongs to the FKBP-type PPIase family. Tig subfamily.

The protein resides in the cytoplasm. It catalyses the reaction [protein]-peptidylproline (omega=180) = [protein]-peptidylproline (omega=0). Functionally, involved in protein export. Acts as a chaperone by maintaining the newly synthesized protein in an open conformation. Functions as a peptidyl-prolyl cis-trans isomerase. This is Trigger factor from Helicobacter pylori (strain P12).